The sequence spans 277 residues: Protein OPG166 (277 aa).

Residues asparagine 29 and asparagine 58 are each glycosylated (N-linked (GlcNAc...) asparagine; by host). Transmembrane regions (helical) follow at residues 124-144, 156-176, 186-206, 219-239, and 247-267; these read TMLM…EITY, GILQ…AFLF, IIGL…KVFS, LIIY…GLSL, and LLLS…LFLV.

Belongs to the orthopoxvirus OPG166 protein family.

It localises to the host membrane. Functionally, promotes, when overexpressed, the influx of extracellular Ca(2+), leading to membrane permeability and host cell necrosis. The chain is Protein OPG166 (OPG166) from Bos taurus (Bovine).